The primary structure comprises 393 residues: Putative odorant receptor 69a, isoform A (393 aa).

The Cytoplasmic portion of the chain corresponds to 1-39; it reads MQLHDHMKYIDLGCKMACIPRYQWKGRPTERQFYASEQR. A helical transmembrane segment spans residues 40–60; the sequence is IVFLLGTICQIFQITGVLIYW. Residues 61-76 are Extracellular-facing; that stretch reads YCNGRLATETGTFVAQ. Residues 77–97 traverse the membrane as a helical segment; that stretch reads LSEMCSSFCLTFVGFCNVYAI. Over 98 to 139 the chain is Cytoplasmic; it reads STNRNQIETLLEELHQIYPRYRKNHYRCQHYFDMAMTIMRIE. Residues 140 to 160 traverse the membrane as a helical segment; sequence FLFYMILYVYYNSAPLWVLLW. Residues 161–189 are Extracellular-facing; sequence EHLHEEYDLSFKTQTNTWFPWKVHGSALG. Residues 190–210 traverse the membrane as a helical segment; sequence FGMAVLSITVGSFVGVGFSIV. The Cytoplasmic segment spans residues 211 to 269; that stretch reads TQNLICLLTFQLKLHYDGISSQLVSLDCRRPGAHKELSILIAHHSRILQLGDQVNDIMN. The helical transmembrane segment at 270 to 290 threads the bilayer; the sequence is FVFGSSLVGATIAICMSSVSI. Residues 291 to 304 lie on the Extracellular side of the membrane; it reads MLLDLASAFKYASG. A helical membrane pass occupies residues 305-325; it reads LVAFVLYNFVICYMGTEVTLA. Topologically, residues 326–365 are cytoplasmic; it reads SGKVLPAAFYNNWYEGDLVYRRMLLILMMRATKPYMWKTY. A helical membrane pass occupies residues 366–386; it reads KLAPVSITTYMATLKFSYQMF. Topologically, residues 387–393 are extracellular; it reads TCVRSLK.

Belongs to the insect chemoreceptor superfamily. Heteromeric odorant receptor channel (TC 1.A.69) family. Or49a subfamily. Interacts with Orco. Complexes exist early in the endomembrane system in olfactory sensory neurons (OSNs), coupling these complexes to the conserved ciliary trafficking pathway. As to expression, expressed in olfactory sensory neurons in the antenna.

The protein localises to the cell membrane. Odorant receptor which mediates acceptance or avoidance behavior, depending on its substrates. The odorant receptor repertoire encodes a large collection of odor stimuli that vary widely in identity, intensity, and duration. May form a complex with Orco to form odorant-sensing units, providing sensitive and prolonged odorant signaling and calcium permeability. The polypeptide is Putative odorant receptor 69a, isoform A (Or69a) (Drosophila melanogaster (Fruit fly)).